A 235-amino-acid polypeptide reads, in one-letter code: 7-cyano-7-deazaguanine synthase (235 aa).

8 to 18 (FSGGQDSTTCL) contributes to the ATP binding site. Zn(2+) is bound by residues C187, C196, C199, and C202.

The protein belongs to the QueC family. Zn(2+) serves as cofactor.

It catalyses the reaction 7-carboxy-7-deazaguanine + NH4(+) + ATP = 7-cyano-7-deazaguanine + ADP + phosphate + H2O + H(+). Its pathway is purine metabolism; 7-cyano-7-deazaguanine biosynthesis. In terms of biological role, catalyzes the ATP-dependent conversion of 7-carboxy-7-deazaguanine (CDG) to 7-cyano-7-deazaguanine (preQ(0)). This is 7-cyano-7-deazaguanine synthase from Aeromonas hydrophila subsp. hydrophila (strain ATCC 7966 / DSM 30187 / BCRC 13018 / CCUG 14551 / JCM 1027 / KCTC 2358 / NCIMB 9240 / NCTC 8049).